A 75-amino-acid chain; its full sequence is Small integral membrane protein 7 (75 aa).

The N-terminal stretch at Met1–Ala17 is a signal peptide. Residues Val18–Tyr53 are Extracellular-facing. Residues Phe54–Gly74 form a helical membrane-spanning segment. Position 75 (Ser75) is a topological domain, cytoplasmic.

It belongs to the SMIM7 family.

Its subcellular location is the membrane. The polypeptide is Small integral membrane protein 7 (Smim7) (Mus musculus (Mouse)).